Here is an 892-residue protein sequence, read N- to C-terminus: UPF0182 protein Gura_0902 (892 aa).

A run of 7 helical transmembrane segments spans residues 6-26, 50-70, 103-123, 158-178, 201-221, 248-268, and 271-291; these read FIII…LINF, VGAG…NLHF, LGIL…AMQW, MLKI…GAVY, LAVL…LNGC, ILTV…WQGA, and LALL…KAYP.

This sequence belongs to the UPF0182 family.

It localises to the cell membrane. This is UPF0182 protein Gura_0902 from Geotalea uraniireducens (strain Rf4) (Geobacter uraniireducens).